The primary structure comprises 188 residues: Elongation factor P (188 aa).

It belongs to the elongation factor P family.

The protein resides in the cytoplasm. It functions in the pathway protein biosynthesis; polypeptide chain elongation. Involved in peptide bond synthesis. Stimulates efficient translation and peptide-bond synthesis on native or reconstituted 70S ribosomes in vitro. Probably functions indirectly by altering the affinity of the ribosome for aminoacyl-tRNA, thus increasing their reactivity as acceptors for peptidyl transferase. This chain is Elongation factor P, found in Chlorobaculum parvum (strain DSM 263 / NCIMB 8327) (Chlorobium vibrioforme subsp. thiosulfatophilum).